The following is a 338-amino-acid chain: tRNA N6-adenosine threonylcarbamoyltransferase (338 aa).

Positions 110, 114, and 131 each coordinate Fe cation. Residues 131-135, aspartate 163, aspartate 184, and asparagine 268 each bind substrate; that span reads YVSGG. Position 296 (aspartate 296) interacts with Fe cation.

This sequence belongs to the KAE1 / TsaD family. It depends on Fe(2+) as a cofactor.

It localises to the cytoplasm. The catalysed reaction is L-threonylcarbamoyladenylate + adenosine(37) in tRNA = N(6)-L-threonylcarbamoyladenosine(37) in tRNA + AMP + H(+). In terms of biological role, required for the formation of a threonylcarbamoyl group on adenosine at position 37 (t(6)A37) in tRNAs that read codons beginning with adenine. Is probably involved in the transfer of the threonylcarbamoyl moiety of threonylcarbamoyl-AMP (TC-AMP) to the N6 group of A37. The protein is tRNA N6-adenosine threonylcarbamoyltransferase of Staphylothermus marinus (strain ATCC 43588 / DSM 3639 / JCM 9404 / F1).